The chain runs to 469 residues: Sorting and assembly machinery component 50 homolog (469 aa).

Residues 1–20 (MGTVHARSLEPLPSSGPDFG) form a disordered region. In terms of domain architecture, POTRA spans 45–125 (VVVQHVHFDG…LDVTFEVTEL (81 aa)). Lysine 255 is modified (N6-methyllysine).

This sequence belongs to the SAM50/omp85 family. Associates with the mitochondrial contact site and cristae organizing system (MICOS) complex, composed of at least MICOS10/MIC10, CHCHD3/MIC19, CHCHD6/MIC25, APOOL/MIC27, IMMT/MIC60, APOO/MIC23/MIC26 and QIL1/MIC13. This complex was also known under the names MINOS or MitOS complex. The MICOS complex associates with mitochondrial outer membrane proteins SAMM50, MTX1 and MTX2 (together described as components of the mitochondrial outer membrane sorting assembly machinery (SAM) complex) and DNAJC11, mitochondrial inner membrane protein TMEM11 and with HSPA9. The MICOS and SAM complexes together with DNAJC11 are part of a large protein complex spanning both membranes termed the mitochondrial intermembrane space bridging (MIB) complex. Interacts with CHCHD3/MIC19. Interacts with ARMC1. In terms of assembly, (Microbial infection) Interacts with parasite T.gondii RH strain MAF1b1; the interaction is probably indirect and results in the disruption of the MIB complex and the formation of SPOTs (structures positive for outer mitochondrial membrane (OMM)), a cellular response to OMM stress, which leads to the constitutive shedding of OMM vesicles.

It localises to the mitochondrion outer membrane. The protein resides in the cytoplasm. It is found in the mitochondrion. Functionally, plays a crucial role in the maintenance of the structure of mitochondrial cristae and the proper assembly of the mitochondrial respiratory chain complexes. Required for the assembly of TOMM40 into the TOM complex. The sequence is that of Sorting and assembly machinery component 50 homolog (SAMM50) from Homo sapiens (Human).